A 436-amino-acid polypeptide reads, in one-letter code: UBX domain-containing protein 7 (436 aa).

A Glycyl lysine isopeptide (Lys-Gly) (interchain with G-Cter in ubiquitin) cross-link involves residue lysine 19. A disordered region spans residues 115 to 141 (AGESSSRETNPGLAREEKSSRDVHRKN). The UBX domain maps to 212-290 (LHSSKCVLQI…ELTPRSALLL (79 aa)). The segment covering 325–346 (DKDPEVTSQREETSKPNRHEVR) has biased composition (basic and acidic residues). Disordered stretches follow at residues 325–357 (DKDPEVTSQREETSKPNRHEVRSSTPLSGAASS) and 371–436 (SSAH…EDKK). Low complexity predominate over residues 347–357 (SSTPLSGAASS). Residues 371 to 408 (SSAHASPMLTPSGTRYPSETNLTTSRSVSPNVFQFVNN) are compositionally biased toward polar residues. Position 388 is a phosphoserine (serine 388). The segment covering 426–436 (HLEKKKDEDKK) has biased composition (basic and acidic residues).

As to quaternary structure, interacts with CDC48.

Its subcellular location is the endoplasmic reticulum. Its function is as follows. Involved in CDC48-dependent protein degradation through the ubiquitin/proteasome pathway. The polypeptide is UBX domain-containing protein 7 (UBX7) (Saccharomyces cerevisiae (strain ATCC 204508 / S288c) (Baker's yeast)).